A 606-amino-acid chain; its full sequence is CDPK-related kinase 8 (606 aa).

A compositionally biased stretch (polar residues) spans 1-14; that stretch reads MGGCTSKPSTSSGR. Residues 1–132 form a disordered region; that stretch reads MGGCTSKPST…TEVPQREEEE (132 aa). A lipid anchor (N-myristoyl glycine) is attached at glycine 2. Over residues 98–110 the composition is skewed to basic residues; that stretch reads KHIRAALRRRKGK. In terms of domain architecture, Protein kinase spans 150 to 412; the sequence is VELGEEIGRG…ASQALMHPWI (263 aa). ATP is bound by residues 156 to 164 and lysine 182; that span reads IGRGHFGYT. Residue aspartate 278 is the Proton acceptor of the active site. Serine 318 carries the post-translational modification Phosphoserine. The tract at residues 418–448 is autoinhibitory domain; it reads DMNIPFDILIFRQMKAYLRSSSLRKAALRAL. The segment at 437–457 is calmodulin binding (CaMBD); the sequence is SSSLRKAALRALSKTLIKDEI. EF-hand domains are found at residues 455–491, 492–527, 528–567, and 570–599; these read DEIL…ATEA, MKES…VHQH, ESLD…GPSI, and HSVL…VSVR. 9 residues coordinate Ca(2+): asparagine 470, aspartate 472, glutamate 516, aspartate 545, asparagine 547, asparagine 549, glutamate 556, aspartate 581, and lysine 583. Residue serine 585 is modified to Phosphoserine.

This sequence belongs to the protein kinase superfamily. Ser/Thr protein kinase family. CDPK subfamily. As to quaternary structure, binds calmodulin (CaM) in a calcium-dependent manner. Post-translationally, autophosphorylated.

The protein resides in the membrane. It catalyses the reaction L-seryl-[protein] + ATP = O-phospho-L-seryl-[protein] + ADP + H(+). The enzyme catalyses L-threonyl-[protein] + ATP = O-phospho-L-threonyl-[protein] + ADP + H(+). With respect to regulation, activated by calcium and calmodulin. Autophosphorylation may play an important role in the regulation of the kinase activity. In terms of biological role, may play a role in signal transduction pathways that involve calcium as a second messenger. The polypeptide is CDPK-related kinase 8 (CRK8) (Arabidopsis thaliana (Mouse-ear cress)).